The following is a 265-amino-acid chain: 14-3-3-like protein GF14 nu (265 aa).

A phosphoserine mark is found at Ser67, Ser109, and Ser190. Thr211 carries the post-translational modification Phosphothreonine. Residues 242–265 (AGGDEIKEASKHEPEEGKPAETGQ) are disordered. Over residues 245–265 (DEIKEASKHEPEEGKPAETGQ) the composition is skewed to basic and acidic residues.

It belongs to the 14-3-3 family. In terms of assembly, component of the SERK1 signaling complex, composed of KAPP, CDC48A, GRF6 or GRF7, SERK1, SERK2, SERK3/BAK1 and BRI1. Interacts with DREB1A and DREB1B in the nucleus. Interacts with CINV1.

The protein localises to the nucleus. Its subcellular location is the cytoplasm. Is associated with a DNA binding complex that binds to the G box, a well-characterized cis-acting DNA regulatory element found in plant genes. The polypeptide is 14-3-3-like protein GF14 nu (GRF7) (Arabidopsis thaliana (Mouse-ear cress)).